A 123-amino-acid polypeptide reads, in one-letter code: WAP four-disulfide core domain protein 5 (123 aa).

The first 24 residues, 1 to 24 (MRIQSLLLLGALLAVGSQLPAVFG), serve as a signal peptide directing secretion. 2 WAP domains span residues 27 to 73 (KGEK…CVPR) and 74 to 121 (VSVK…RDPA). 8 disulfide bridges follow: C34-C62, C41-C66, C49-C61, C55-C70, C81-C109, C88-C113, C96-C108, and C102-C117.

It localises to the secreted. Functionally, putative acid-stable proteinase inhibitor. This is WAP four-disulfide core domain protein 5 (WFDC5) from Chlorocebus aethiops (Green monkey).